The chain runs to 1032 residues: MSEQIQIDTGAFQRRVNKLLSCWKDSSADFEQLNQVDSLLVVMGGQNDDLIYSKTTAIHSWLLGYEFPSTVILFTKDSVTFVTSASKAVHLEPLKRSSTGFNLEILKRSKDEASNRALWDDLVSRIDAQGSKVGCLPKDKPIGKFADEWQSVFEKAQSSKDFKMIDVSASLSAVWATKDDDEIKAIRYASKMSSAVMSGYFENEMSTILDEGKKVTHEQLSERIEGKLDDTKLWKRVKGLEGADLSLADWCYTPIVQSGGEYDLKTSAVSSTKRLQGADGNGGVVIASMGIKYRNYCSNIGRTYLIDPHNSQQKMYAFLHEIQTQLADKHLRAGATCKEIYSKAVEIVRAKDEKLVASFVKNVGFGIGLEFRDSAYVLSAKNNRALQRDMVVNLSVGFQDLDDPNHKGEVYSLLLIDTLRINDNAPATFLTDRVRGTNDMSFFFKDDEEEEEEEERRSPAKPDGKVTPGGKVLRNKNRGAAHDDTAAEKMKLHQKELAKQKQEDGLARFAGEDGEGNASNEKVFKKFESYKRENLLPTKVADLKIMVDHRAQSIILPIYGYAVPFHINTLKNVSKSDEGEYTYLRLNFVTPGQIAGKKEDVPFDDPDATFVRSMSYRSSDSSRFTELFREITELRKSATKREAEEKELADVVEQDKLILTKSRAYTLPEVFPRPAMEGKRVPGDLTIHQNGLRFSSPLRPDQKIDLLFSNMKHLFFQPCDKELIVIVHIHLKSPIMIGKRKAKDIQFYREASDVQFDETGNRKRKYRSGDEDEIELEQEERRRRSQLNKEFKVFAERIAEASEGRVSVDVPYRELGFNGVPFRTNVLLQPTTDCLVHLTDPPFLVITLTDVEIVHLERVQFGLQSFDMVFVFSDFSRAPMHVTSIPTTSLDDVKQWLDSVDICVTEGAVNLNWGAIMKTVNEDPYDFFAEGGWGFLQSGSDDGGSSESESGSEFGSEMDDGQEETDEDSDSGSDFGDSAEDESGSEGFEDESEEGEDWDELERKAARADEKKRRQQGGSDDDEDSGKKGKRR.

The disordered stretch occupies residues 443-485; it reads FFKDDEEEEEEEERRSPAKPDGKVTPGGKVLRNKNRGAAHDDT. Positions 455-464 are enriched in basic and acidic residues; sequence ERRSPAKPDG. Coiled-coil stretches lie at residues 633–653 and 778–803; these read ELRKSATKREAEEKELADVVE and QEERRRRSQLNKEFKVFAERIAEASE. Residues 936–1032 are disordered; that stretch reads LQSGSDDGGS…EDSGKKGKRR (97 aa). Positions 938-955 are enriched in low complexity; sequence SGSDDGGSSESESGSEFG. A compositionally biased stretch (acidic residues) spans 956–1000; that stretch reads SEMDDGQEETDEDSDSGSDFGDSAEDESGSEGFEDESEEGEDWDE. Positions 996-1017 form a coiled coil; that stretch reads EDWDELERKAARADEKKRRQQG. A compositionally biased stretch (basic and acidic residues) spans 1001–1012; sequence LERKAARADEKK.

This sequence belongs to the peptidase M24 family. SPT16 subfamily. Forms a stable heterodimer with POB3. The SPT16-POB3 dimer weakly associates with multiple molecules of NHP6 to form the FACT complex.

It localises to the nucleus. Its subcellular location is the chromosome. Its function is as follows. Component of the FACT complex, a general chromatin factor that acts to reorganize nucleosomes. The FACT complex is involved in multiple processes that require DNA as a template such as mRNA elongation, DNA replication and DNA repair. During transcription elongation the FACT complex acts as a histone chaperone that both destabilizes and restores nucleosomal structure. It facilitates the passage of RNA polymerase II and transcription by promoting the dissociation of one histone H2A-H2B dimer from the nucleosome, then subsequently promotes the reestablishment of the nucleosome following the passage of RNA polymerase II. The chain is FACT complex subunit SPT16 (SPT16) from Mycosarcoma maydis (Corn smut fungus).